A 160-amino-acid polypeptide reads, in one-letter code: Cyclic pyranopterin monophosphate synthase (160 aa).

Substrate is bound by residues 76–78 (LCH) and 114–115 (ME). The active site involves aspartate 129.

This sequence belongs to the MoaC family. In terms of assembly, homohexamer; trimer of dimers.

The catalysed reaction is (8S)-3',8-cyclo-7,8-dihydroguanosine 5'-triphosphate = cyclic pyranopterin phosphate + diphosphate. Its pathway is cofactor biosynthesis; molybdopterin biosynthesis. Functionally, catalyzes the conversion of (8S)-3',8-cyclo-7,8-dihydroguanosine 5'-triphosphate to cyclic pyranopterin monophosphate (cPMP). The chain is Cyclic pyranopterin monophosphate synthase from Vibrio cholerae serotype O1 (strain ATCC 39541 / Classical Ogawa 395 / O395).